The primary structure comprises 326 residues: Pectate lyase plyB (326 aa).

Residues Met1–Ala15 form the signal peptide. 3 residues coordinate Ca(2+): Asp133, Asp162, and Asp166. Arg219 is an active-site residue.

This sequence belongs to the polysaccharide lyase 1 family. The cofactor is Ca(2+).

It is found in the secreted. It carries out the reaction Eliminative cleavage of (1-&gt;4)-alpha-D-galacturonan to give oligosaccharides with 4-deoxy-alpha-D-galact-4-enuronosyl groups at their non-reducing ends.. It functions in the pathway glycan metabolism; pectin degradation; 2-dehydro-3-deoxy-D-gluconate from pectin: step 2/5. In terms of biological role, pectinolytic enzyme consist of four classes of enzymes: pectin lyase, polygalacturonase, pectin methylesterase and rhamnogalacturonase. Among pectinolytic enzymes, pectin lyase is the most important in depolymerization of pectin, since it cleaves internal glycosidic bonds of highly methylated pectins. This is Pectate lyase plyB (plyB) from Emericella nidulans (strain FGSC A4 / ATCC 38163 / CBS 112.46 / NRRL 194 / M139) (Aspergillus nidulans).